A 587-amino-acid polypeptide reads, in one-letter code: Aspartate--tRNA ligase (587 aa).

Glu174 serves as a coordination point for L-aspartate. Residues 198-201 (QITK) are aspartate. Residue Arg220 coordinates L-aspartate. Residues 220-222 (RDE) and Gln229 contribute to the ATP site. Residue His443 participates in L-aspartate binding. Residue Glu477 coordinates ATP. Arg484 contacts L-aspartate. 529–532 (GLDR) is a binding site for ATP.

This sequence belongs to the class-II aminoacyl-tRNA synthetase family. Type 1 subfamily. Homodimer.

The protein resides in the cytoplasm. The catalysed reaction is tRNA(Asp) + L-aspartate + ATP = L-aspartyl-tRNA(Asp) + AMP + diphosphate. Its function is as follows. Catalyzes the attachment of L-aspartate to tRNA(Asp) in a two-step reaction: L-aspartate is first activated by ATP to form Asp-AMP and then transferred to the acceptor end of tRNA(Asp). The polypeptide is Aspartate--tRNA ligase (Streptococcus pneumoniae serotype 4 (strain ATCC BAA-334 / TIGR4)).